The primary structure comprises 249 residues: UDP-N-acetyl-D-mannosaminuronic acid transferase (249 aa).

This sequence belongs to the glycosyltransferase 26 family.

It carries out the reaction UDP-N-acetyl-alpha-D-mannosaminouronate + N-acetyl-alpha-D-glucosaminyl-di-trans,octa-cis-undecaprenyl diphosphate = beta-D-ManNAcA-(1-&gt;4)-alpha-D-GlcNAc-di-trans,octa-cis-undecaprenyl diphosphate + UDP + H(+). Its pathway is bacterial outer membrane biogenesis; enterobacterial common antigen biosynthesis. Catalyzes the synthesis of Und-PP-GlcNAc-ManNAcA (Lipid II), the second lipid-linked intermediate involved in enterobacterial common antigen (ECA) synthesis. This chain is UDP-N-acetyl-D-mannosaminuronic acid transferase, found in Pectobacterium atrosepticum (strain SCRI 1043 / ATCC BAA-672) (Erwinia carotovora subsp. atroseptica).